We begin with the raw amino-acid sequence, 72 residues long: Large ribosomal subunit protein uL29 (72 aa).

This sequence belongs to the universal ribosomal protein uL29 family.

This Prochlorococcus marinus subsp. pastoris (strain CCMP1986 / NIES-2087 / MED4) protein is Large ribosomal subunit protein uL29.